Here is a 417-residue protein sequence, read N- to C-terminus: Gamma-glutamyl phosphate reductase (417 aa).

It belongs to the gamma-glutamyl phosphate reductase family.

Its subcellular location is the cytoplasm. It carries out the reaction L-glutamate 5-semialdehyde + phosphate + NADP(+) = L-glutamyl 5-phosphate + NADPH + H(+). The protein operates within amino-acid biosynthesis; L-proline biosynthesis; L-glutamate 5-semialdehyde from L-glutamate: step 2/2. Catalyzes the NADPH-dependent reduction of L-glutamate 5-phosphate into L-glutamate 5-semialdehyde and phosphate. The product spontaneously undergoes cyclization to form 1-pyrroline-5-carboxylate. The chain is Gamma-glutamyl phosphate reductase from Escherichia coli O157:H7.